We begin with the raw amino-acid sequence, 173 residues long: MEIGQYQPNLEGDGLRIGIVQSRFNEPVCNGLADACVEELERLGVSGEDVLLVTVPGALEIPLALQKLAESNQFDALIALGAVIRGETYHFELVSNESGAGITRIALDFNTPIANAVLTTETDEQAIARMTEKGRDAARVAVEMANLTMTLDQLSDDEEDEEDEDDEDEEERA.

Residues Phe24, 58–60 (ALE), and 82–84 (AVI) each bind 5-amino-6-(D-ribitylamino)uracil. Position 87–88 (87–88 (ET)) interacts with (2S)-2-hydroxy-3-oxobutyl phosphate. Residue His90 is the Proton donor of the active site. Asn115 contacts 5-amino-6-(D-ribitylamino)uracil. Arg129 contributes to the (2S)-2-hydroxy-3-oxobutyl phosphate binding site. The disordered stretch occupies residues 150-173 (TLDQLSDDEEDEEDEDDEDEEERA). Acidic residues predominate over residues 154 to 173 (LSDDEEDEEDEDDEDEEERA).

Belongs to the DMRL synthase family.

The catalysed reaction is (2S)-2-hydroxy-3-oxobutyl phosphate + 5-amino-6-(D-ribitylamino)uracil = 6,7-dimethyl-8-(1-D-ribityl)lumazine + phosphate + 2 H2O + H(+). Its pathway is cofactor biosynthesis; riboflavin biosynthesis; riboflavin from 2-hydroxy-3-oxobutyl phosphate and 5-amino-6-(D-ribitylamino)uracil: step 1/2. Its function is as follows. Catalyzes the formation of 6,7-dimethyl-8-ribityllumazine by condensation of 5-amino-6-(D-ribitylamino)uracil with 3,4-dihydroxy-2-butanone 4-phosphate. This is the penultimate step in the biosynthesis of riboflavin. The chain is 6,7-dimethyl-8-ribityllumazine synthase from Burkholderia mallei (strain NCTC 10247).